Here is an 889-residue protein sequence, read N- to C-terminus: Alanine--tRNA ligase (889 aa).

His-574, His-578, Cys-682, and His-686 together coordinate Zn(2+).

Belongs to the class-II aminoacyl-tRNA synthetase family. Zn(2+) serves as cofactor.

It localises to the cytoplasm. It catalyses the reaction tRNA(Ala) + L-alanine + ATP = L-alanyl-tRNA(Ala) + AMP + diphosphate. Functionally, catalyzes the attachment of alanine to tRNA(Ala) in a two-step reaction: alanine is first activated by ATP to form Ala-AMP and then transferred to the acceptor end of tRNA(Ala). Also edits incorrectly charged Ser-tRNA(Ala) and Gly-tRNA(Ala) via its editing domain. The protein is Alanine--tRNA ligase of Orientia tsutsugamushi (strain Ikeda) (Rickettsia tsutsugamushi).